The chain runs to 199 residues: MTEPNRVAEVRRDTAETKIRVRVDLDGTGVARLATGIGFFDHMLDQLARHGLVDLEIEADGDLHIDGHHTVEDVGITLGQAFAKAVGDKKGLRRYGHAYVPLDEALSRVVVDFSGRPGLHMRVPFKAGMIGALDTQLVYEFFQGFVNHAGVTLHIDNLHGDNAHHQCETVFKAFARALRMALERDPRMAGVIPSTKGSL.

This sequence belongs to the imidazoleglycerol-phosphate dehydratase family.

The protein localises to the cytoplasm. The enzyme catalyses D-erythro-1-(imidazol-4-yl)glycerol 3-phosphate = 3-(imidazol-4-yl)-2-oxopropyl phosphate + H2O. The protein operates within amino-acid biosynthesis; L-histidine biosynthesis; L-histidine from 5-phospho-alpha-D-ribose 1-diphosphate: step 6/9. This Methylibium petroleiphilum (strain ATCC BAA-1232 / LMG 22953 / PM1) protein is Imidazoleglycerol-phosphate dehydratase.